A 140-amino-acid chain; its full sequence is Large ribosomal subunit protein bL34m (140 aa).

Belongs to the bacterial ribosomal protein bL34 family. Component of the mitochondrial large ribosomal subunit (mt-LSU). Mature N.crassa 74S mitochondrial ribosomes consist of a small (37S) and a large (54S) subunit. The 37S small subunit contains a 16S ribosomal RNA (16S mt-rRNA) and 32 different proteins. The 54S large subunit contains a 23S rRNA (23S mt-rRNA) and 42 different proteins.

The protein resides in the mitochondrion. Component of the mitochondrial ribosome (mitoribosome), a dedicated translation machinery responsible for the synthesis of mitochondrial genome-encoded proteins, including at least some of the essential transmembrane subunits of the mitochondrial respiratory chain. The mitoribosomes are attached to the mitochondrial inner membrane and translation products are cotranslationally integrated into the membrane. The chain is Large ribosomal subunit protein bL34m (mrpl34) from Neurospora crassa (strain ATCC 24698 / 74-OR23-1A / CBS 708.71 / DSM 1257 / FGSC 987).